Consider the following 72-residue polypeptide: Crustacean hyperglycemic hormone (72 aa).

The residue at position 1 (Q1) is a Pyrrolidone carboxylic acid. Position 3 is a D-phenylalanine; in form CHH-II (F3). 3 cysteine pairs are disulfide-bonded: C7–C43, C23–C39, and C26–C52. Residue V72 is modified to Valine amide.

Stereoinversion of L-Phe (in CHH-I) to D-Phe (in CHH-II) the two forms are present in a ratio 3:1 (CHH-I/CHH-II). Produced by the medulla terminalis X-organ in the eyestalks and transported to the sinus gland where they are stored and released.

It is found in the secreted. Hormone found in the sinus gland of isopods and decapods which controls the blood sugar level. Has a secretagogue action over the amylase released from the midgut gland. May act as a stress hormone and may be involved in the control of molting and reproduction. This is Crustacean hyperglycemic hormone from Procambarus bouvieri (Mexican crayfish).